The chain runs to 181 residues: ATP synthase subunit delta (181 aa).

Belongs to the ATPase delta chain family. F-type ATPases have 2 components, F(1) - the catalytic core - and F(0) - the membrane proton channel. F(1) has five subunits: alpha(3), beta(3), gamma(1), delta(1), epsilon(1). F(0) has three main subunits: a(1), b(2) and c(10-14). The alpha and beta chains form an alternating ring which encloses part of the gamma chain. F(1) is attached to F(0) by a central stalk formed by the gamma and epsilon chains, while a peripheral stalk is formed by the delta and b chains.

The protein localises to the cell membrane. F(1)F(0) ATP synthase produces ATP from ADP in the presence of a proton or sodium gradient. F-type ATPases consist of two structural domains, F(1) containing the extramembraneous catalytic core and F(0) containing the membrane proton channel, linked together by a central stalk and a peripheral stalk. During catalysis, ATP synthesis in the catalytic domain of F(1) is coupled via a rotary mechanism of the central stalk subunits to proton translocation. Functionally, this protein is part of the stalk that links CF(0) to CF(1). It either transmits conformational changes from CF(0) to CF(1) or is implicated in proton conduction. The protein is ATP synthase subunit delta of Mycoplasma mycoides subsp. mycoides SC (strain CCUG 32753 / NCTC 10114 / PG1).